Here is a 212-residue protein sequence, read N- to C-terminus: MNNPMIKNGLLLALFALLCTGLVAVVNQQTFDKIKLQQQKELMGILHQLIPEEIHDNELTAQCTLLQNKEALGTEDAMPAYIATAAGKPVAIAMEAIAPDGYNGNIKLIVGINTQGEVLGVRTLAHQETPGLGDKIELRKSDWVTKFVGKVLKSEDDKQWQVQKDGGDFDQFTGATITPRAYVKAVKRAVWYFTQHQAEIFSQPLNCEAKHD.

Residues 9-29 (GLLLALFALLCTGLVAVVNQQ) traverse the membrane as a helical segment. The residue at position 176 (Thr-176) is an FMN phosphoryl threonine.

This sequence belongs to the RnfG family. The complex is composed of six subunits: RnfA, RnfB, RnfC, RnfD, RnfE and RnfG. FMN is required as a cofactor.

Its subcellular location is the cell inner membrane. Its function is as follows. Part of a membrane-bound complex that couples electron transfer with translocation of ions across the membrane. The polypeptide is Ion-translocating oxidoreductase complex subunit G (Shewanella oneidensis (strain ATCC 700550 / JCM 31522 / CIP 106686 / LMG 19005 / NCIMB 14063 / MR-1)).